Here is a 44-residue protein sequence, read N- to C-terminus: MQRTLGGTNRKRKRTSGFRARMRTPDGRNVIRARRKRGRHRLSV.

The disordered stretch occupies residues 1–26 (MQRTLGGTNRKRKRTSGFRARMRTPD). Residues 9 to 22 (NRKRKRTSGFRARM) show a composition bias toward basic residues.

This sequence belongs to the bacterial ribosomal protein bL34 family.

The sequence is that of Large ribosomal subunit protein bL34 from Trichormus variabilis (strain ATCC 29413 / PCC 7937) (Anabaena variabilis).